Reading from the N-terminus, the 464-residue chain is Glutamyl-tRNA reductase (464 aa).

Residues 47–50 (TCNR), Ser145, 150–152 (EPQ), and Gln156 each bind substrate. The Nucleophile role is filled by Cys48. 225–230 (AAGEMN) is an NADP(+) binding site.

It belongs to the glutamyl-tRNA reductase family. As to quaternary structure, homodimer.

The catalysed reaction is (S)-4-amino-5-oxopentanoate + tRNA(Glu) + NADP(+) = L-glutamyl-tRNA(Glu) + NADPH + H(+). It participates in porphyrin-containing compound metabolism; protoporphyrin-IX biosynthesis; 5-aminolevulinate from L-glutamyl-tRNA(Glu): step 1/2. In terms of biological role, catalyzes the NADPH-dependent reduction of glutamyl-tRNA(Glu) to glutamate 1-semialdehyde (GSA). This chain is Glutamyl-tRNA reductase, found in Psychrobacter cryohalolentis (strain ATCC BAA-1226 / DSM 17306 / VKM B-2378 / K5).